A 1083-amino-acid chain; its full sequence is Ubiquitin carboxyl-terminal hydrolase 1 (1083 aa).

The UBP-type zinc-finger motif lies at Arg30 to Lys165. Cys32, His34, Cys56, Cys59, Cys95, Cys98, Cys103, His115, His119, His125, Cys139, and Cys142 together coordinate Zn(2+). One can recognise a USP domain in the interval Arg202–Ile1083. Cys211 serves as the catalytic Nucleophile. Disordered regions lie at residues Lys387–Thr424 and Gly450–Ile486. Basic and acidic residues-rich tracts occupy residues Ser409–Thr419 and Leu455–Arg473. Residues Ala474–Gly485 are compositionally biased toward polar residues. His1029 serves as the catalytic Proton acceptor.

It belongs to the peptidase C19 family.

It catalyses the reaction Thiol-dependent hydrolysis of ester, thioester, amide, peptide and isopeptide bonds formed by the C-terminal Gly of ubiquitin (a 76-residue protein attached to proteins as an intracellular targeting signal).. In terms of biological role, recognizes and hydrolyzes the peptide bond at the C-terminal Gly of ubiquitin. Involved in the processing of poly-ubiquitin precursors as well as that of ubiquitinated proteins. Is involved in resistance to the arginine analog canavanine (CAN). This is Ubiquitin carboxyl-terminal hydrolase 1 (UBP1) from Arabidopsis thaliana (Mouse-ear cress).